The following is a 402-amino-acid chain: Iripin-8 (402 aa).

An N-terminal signal peptide occupies residues 1-16; the sequence is MTRLLWLFAAITASLA. Asn164 and Asn230 each carry an N-linked (GlcNAc...) asparagine glycan.

This sequence belongs to the serpin family. In terms of assembly, interacts with host thrombin/F2. Interacts with host coagulation factor VII/F7 (activated). Interacts with host coagulation factor X/F10 (activated). Interacts with host coagulation factor XII/F12 (activated). Interacts with host coagulation factor IX/F9 (activated). Interacts with host plasmin/PLG. Interacts with host protein C/PROC (activated). Saliva (at protein level). Salivary gland. Midgut. Low-level expression in ovary.

It is found in the secreted. Its function is as follows. Serine protease inhibitor that modulates blood feeding of ticks on vertebrate species. Inhibits the intrinsic and common pathways of blood coagulation in the host. Inhibits host thrombin, factor VIIa, factor Xa, factor XIa, factor XIIa, plasmin and activated protein C. Inhibits host trypsin and kallikrein. Reduces host complement activity. Does not affect proliferation of CD4+ T-cells and neutrophil migration. The sequence is that of Iripin-8 from Ixodes ricinus (Common tick).